The chain runs to 457 residues: Acetylcholine receptor subunit alpha (457 aa).

A signal peptide spans 1–20 (MELTAVLLLLGLCSAGTVLG). Residues 21-230 (SEHETRLVAK…ITYHFVMQRL (210 aa)) lie on the Extracellular side of the membrane. 2 cysteine pairs are disulfide-bonded: Cys148–Cys162 and Cys212–Cys213. A glycan (N-linked (GlcNAc...) asparagine) is linked at Asn161. A run of 3 helical transmembrane segments spans residues 231 to 255 (PLYFIVNVIIPCLLFSFLTSLVFYL), 263 to 281 (MTLSISVLLSLTVFLLVIV), and 297 to 316 (YMLFTMVFVIASIIITVIVI). The Cytoplasmic portion of the chain corresponds to 317–428 (NTHHRSPSTH…WKYVAMVMDH (112 aa)). Residues 429 to 447 (ILLGVFMLVCLIGTLAVFA) form a helical membrane-spanning segment.

The protein belongs to the ligand-gated ion channel (TC 1.A.9) family. Acetylcholine receptor (TC 1.A.9.1) subfamily. Alpha-1/CHRNA1 sub-subfamily. As to quaternary structure, one of the alpha chains that assemble within the acetylcholine receptor, a pentamer of two alpha chains, a beta, a delta, and a gamma (in immature muscle) or epsilon (in mature muscle) chains. The muscle heteropentamer composed of alpha-1, beta-1, delta, epsilon subunits interacts with the alpha-conotoxin ImII.

The protein localises to the postsynaptic cell membrane. Its subcellular location is the cell membrane. It catalyses the reaction K(+)(in) = K(+)(out). The catalysed reaction is Na(+)(in) = Na(+)(out). In terms of biological role, upon acetylcholine binding, the AChR responds by an extensive change in conformation that affects all subunits and leads to opening of an ion-conducting channel across the plasma membrane. The chain is Acetylcholine receptor subunit alpha (Chrna1) from Rattus norvegicus (Rat).